The primary structure comprises 275 residues: Large ribosomal subunit protein uL2 (275 aa).

The disordered stretch occupies residues 216 to 275; the sequence is GIRPQTRGSAMNPIDHPHGGGEGKTNSGRHPVTPWGMPTKGYKTRKKKASDKLIISKRKK. Positions 257-275 are enriched in basic residues; the sequence is YKTRKKKASDKLIISKRKK.

This sequence belongs to the universal ribosomal protein uL2 family. Part of the 50S ribosomal subunit. Forms a bridge to the 30S subunit in the 70S ribosome.

One of the primary rRNA binding proteins. Required for association of the 30S and 50S subunits to form the 70S ribosome, for tRNA binding and peptide bond formation. It has been suggested to have peptidyltransferase activity; this is somewhat controversial. Makes several contacts with the 16S rRNA in the 70S ribosome. This Aliarcobacter butzleri (strain RM4018) (Arcobacter butzleri) protein is Large ribosomal subunit protein uL2.